The following is a 490-amino-acid chain: MILPCESFNGVPSGCLIIEMNWYSVLKASTAIFFPEKYSSSTSSLSKRSPISAPMINVDGEYLKIFAGRIKLMKAVILAAGLGTRLGGVPKPLVRVGGCEIILRTMKLLSPHVSEFIIVASRYADDIDAFLKDKGFNYKIVRHDRPEKGNGYSLLVAKNHVEDRFILTMGDHVYSQQFIEKAVRGEGVIADREPRFVDIGEATKIRVEDGRVAKIGKDLREFDCVDTGFFVLDDSIFEHAEKLRDREEIPLSEIVKLARLPVTYVDGELWMDVDTKEDVRRANRALVSAAVKGSGDGFISRKINRKISTRISAAIVNKVNPNQMTLISFLVGAFSALASFFSIPLAGLLYQFSSILDGCDGEIARASLKMSKKGGYVDSILDRFVDFLFLAIIALLYPKTATVAMFAIFGSVMVSYTSEKYKAEFGESIFGKFRVLNYIPGKRDERIFLIMIFCLLSAISLQWIFWMFLFVAAISLTRVVVTLLAVLVSK.

The mobA-like NTP transferase stretch occupies residues 72-290 (LMKAVILAAG…RANRALVSAA (219 aa)). Residues 78–80 (LAA), lysine 91, aspartate 144, and glutamate 180 each bind CTP. Glutamate 180 is a binding site for Mg(2+). Residues 291-490 (VKGSGDGFIS…VTLLAVLVSK (200 aa)) are CDP-alcohol phosphatidyltransferases. 4 consecutive transmembrane segments (helical) span residues 329-349 (FLVG…AGLL), 389-409 (FLAI…FAIF), 447-467 (IFLI…IFWM), and 468-488 (FLFV…AVLV).

The protein in the N-terminal section; belongs to the MobA family. This sequence in the C-terminal section; belongs to the CDP-alcohol phosphatidyltransferase class-I family. In terms of assembly, forms a mixture of monomers and dimers in solution, with prevalence of the monomeric form. Requires Mg(2+) as cofactor.

It localises to the membrane. The enzyme catalyses 1D-myo-inositol 3-phosphate + CTP + H(+) = CDP-1L-myo-inositol + diphosphate. It carries out the reaction CDP-1L-myo-inositol + 1D-myo-inositol 3-phosphate = bis(1L-myo-inositol) 3,1'-phosphate 1-phosphate + CMP + H(+). Its function is as follows. Involved in biosynthesis of di-myo-inositol phosphate (DIP), a widespread organic solute in microorganisms adapted to hot environments. Catalyzes the condensation of CTP and L-myo-inositol-1-phosphate into CDP-L-myo-inositol, as well as the biosynthesis of di-myo-inositol-1,3'-phosphate-1'-phosphate (DIPP) from CDP-L-myo-inositol and L-myo-inositol-1-phosphate. The cytidylyltransferase is absolutely specific for CTP and L-myo-inositol-1-P. The DIPP synthase uses only L-myoinositol-1-phosphate as an alcohol acceptor, but CDP-glycerol, as well as CDP-L-myo-inositol and CDP-D-myoinositol, are recognized as alcohol donors. This chain is Bifunctional IPC transferase and DIPP synthase, found in Archaeoglobus fulgidus (strain ATCC 49558 / DSM 4304 / JCM 9628 / NBRC 100126 / VC-16).